Consider the following 480-residue polypeptide: MTLSFTARWRDELPATYTALLPTPLKNARLIWYNDKLAQQLAIPASLFDATNGAGVWGGETLLPGMSPVAQVYSGHQFGVWAGQLGDGRGILLGEQLLAYGSTLDWHLKGAGLTPYSRMGDGRAVLRSTIRESLASEAMHYLGIPTTRALSIVASDTPVQRETQETGAMLMRLAQSHMRFGHFEHFYYRREPEKVQQLADFAIRHYWPQWQDVPEKYALWFEEVAARTGRLIAEWQTVGFSHGVMNTDNMSILGLTIDYGPFGFLDDYDPGFIGNHSDHQGRYRFDNQPLVALWNLQRLAQTLTPFIEIDALNRALDRYQDALLTHYGQRMRQKLGFFTEQKDDNALLNELFSLMAREGSDYTRTFRMLSHTEQQSASSPLRDTFIDRAAFDAWFDRYRARLRTEAVDDALRQQQMQRVNPAVVLRNWLAQRAIDAAEQGDMAELHRLHEVLRQPFTDRDDDYASRPPEWGKRLEVSCSS.

The ATP site is built by G86, G88, R89, K109, D121, G122, R172, and R179. The active-site Proton acceptor is the D248. 2 residues coordinate Mg(2+): N249 and D258. D258 contacts ATP.

This sequence belongs to the SELO family. Requires Mg(2+) as cofactor. Mn(2+) is required as a cofactor.

The catalysed reaction is L-seryl-[protein] + ATP = 3-O-(5'-adenylyl)-L-seryl-[protein] + diphosphate. The enzyme catalyses L-threonyl-[protein] + ATP = 3-O-(5'-adenylyl)-L-threonyl-[protein] + diphosphate. It carries out the reaction L-tyrosyl-[protein] + ATP = O-(5'-adenylyl)-L-tyrosyl-[protein] + diphosphate. It catalyses the reaction L-histidyl-[protein] + UTP = N(tele)-(5'-uridylyl)-L-histidyl-[protein] + diphosphate. The catalysed reaction is L-seryl-[protein] + UTP = O-(5'-uridylyl)-L-seryl-[protein] + diphosphate. The enzyme catalyses L-tyrosyl-[protein] + UTP = O-(5'-uridylyl)-L-tyrosyl-[protein] + diphosphate. In terms of biological role, nucleotidyltransferase involved in the post-translational modification of proteins. It can catalyze the addition of adenosine monophosphate (AMP) or uridine monophosphate (UMP) to a protein, resulting in modifications known as AMPylation and UMPylation. This chain is Protein nucleotidyltransferase YdiU, found in Salmonella enteritidis PT4 (strain P125109).